A 272-amino-acid polypeptide reads, in one-letter code: Nuclear transcription factor Y subunit A-1 (272 aa).

2 disordered regions span residues 1 to 20 (MQSKPGRENEEEVNNHHAVQ) and 34 to 106 (SFGV…PALS). 2 stretches are compositionally biased toward polar residues: residues 46–61 (IPSNSSSLDCPNGSES) and 82–92 (KDSQAATSSRS). Positions 175–198 (YVNAKQYEGILRRRKARAKAELER) match the Subunit association domain (SAD) motif. The segment at residues 205-230 (KPYLHESRHKHAMRRARASGGRFAKK) is a DNA-binding region (NFYA/HAP2-type). Residues 206–272 (PYLHESRHKH…NETLNSSGAP (67 aa)) form a disordered region. The segment covering 211–221 (SRHKHAMRRAR) has biased composition (basic residues). Basic and acidic residues predominate over residues 229–247 (KKSEVEAGEDAGGRDRERG). Composition is skewed to polar residues over residues 248–257 (SATNSSGSEQ) and 263–272 (NETLNSSGAP).

Belongs to the NFYA/HAP2 subunit family. As to quaternary structure, heterotrimeric transcription factor composed of three components, NF-YA, NF-YB and NF-YC. NF-YB and NF-YC must interact and dimerize for NF-YA association and DNA binding. Ubiquitous.

The protein localises to the nucleus. In terms of biological role, stimulates the transcription of various genes by recognizing and binding to a CCAAT motif in promoters. The protein is Nuclear transcription factor Y subunit A-1 (NFYA1) of Arabidopsis thaliana (Mouse-ear cress).